Reading from the N-terminus, the 352-residue chain is tRNA N6-adenosine threonylcarbamoyltransferase (352 aa).

Fe cation contacts are provided by H109 and H113. Substrate-binding positions include 136-140, D169, G182, D186, and N284; that span reads TVSGG. D312 contributes to the Fe cation binding site.

This sequence belongs to the KAE1 / TsaD family. Requires Fe(2+) as cofactor.

The protein resides in the cytoplasm. The enzyme catalyses L-threonylcarbamoyladenylate + adenosine(37) in tRNA = N(6)-L-threonylcarbamoyladenosine(37) in tRNA + AMP + H(+). In terms of biological role, required for the formation of a threonylcarbamoyl group on adenosine at position 37 (t(6)A37) in tRNAs that read codons beginning with adenine. Is involved in the transfer of the threonylcarbamoyl moiety of threonylcarbamoyl-AMP (TC-AMP) to the N6 group of A37, together with TsaE and TsaB. TsaD likely plays a direct catalytic role in this reaction. The sequence is that of tRNA N6-adenosine threonylcarbamoyltransferase from Chloroherpeton thalassium (strain ATCC 35110 / GB-78).